The following is a 252-amino-acid chain: Octanoyltransferase (252 aa).

Residues 56 to 237 form the BPL/LPL catalytic domain; sequence ADTGDEIWLV…RLIANLDGAS (182 aa). Substrate-binding positions include 96 to 103, 168 to 170, and 181 to 183; these read RGGQITYH, ALG, and GLS. Cys199 (acyl-thioester intermediate) is an active-site residue.

Belongs to the LipB family.

Its subcellular location is the cytoplasm. The catalysed reaction is octanoyl-[ACP] + L-lysyl-[protein] = N(6)-octanoyl-L-lysyl-[protein] + holo-[ACP] + H(+). It functions in the pathway protein modification; protein lipoylation via endogenous pathway; protein N(6)-(lipoyl)lysine from octanoyl-[acyl-carrier-protein]: step 1/2. Functionally, catalyzes the transfer of endogenously produced octanoic acid from octanoyl-acyl-carrier-protein onto the lipoyl domains of lipoate-dependent enzymes. Lipoyl-ACP can also act as a substrate although octanoyl-ACP is likely to be the physiological substrate. The sequence is that of Octanoyltransferase from Burkholderia lata (strain ATCC 17760 / DSM 23089 / LMG 22485 / NCIMB 9086 / R18194 / 383).